The following is a 1168-amino-acid chain: Transcription-repair-coupling factor (1168 aa).

The Helicase ATP-binding domain maps to aspartate 633–isoleucine 794. Glycine 646–threonine 653 lines the ATP pocket. The short motif at aspartate 747–glutamine 750 is the DEEQ box element. The Helicase C-terminal domain occupies valine 808–asparagine 969.

It in the N-terminal section; belongs to the UvrB family. The protein in the C-terminal section; belongs to the helicase family. RecG subfamily.

It is found in the cytoplasm. Its function is as follows. Couples transcription and DNA repair by recognizing RNA polymerase (RNAP) stalled at DNA lesions. Mediates ATP-dependent release of RNAP and its truncated transcript from the DNA, and recruitment of nucleotide excision repair machinery to the damaged site. The chain is Transcription-repair-coupling factor from Staphylococcus aureus (strain MSSA476).